We begin with the raw amino-acid sequence, 373 residues long: Alpha-N-acetylgalactosaminide alpha-2,6-sialyltransferase 2 (373 aa).

The Cytoplasmic segment spans residues 1–6 (MDLPRR). Residues 7–27 (WLFRMLLLVATSSGILLMLYS) traverse the membrane as a helical; Signal-anchor for type II membrane protein segment. At 28-373 (SAGQQSPETQ…NAGILWLYQR (346 aa)) the chain is on the lumenal side. 2 disulfide bridges follow: Cys65–Cys147 and Cys150–Cys316. Asn103 is a glycosylation site (N-linked (GlcNAc...) asparagine). Asn155 serves as a coordination point for CMP-N-acetyl-beta-neuraminate. N-linked (GlcNAc...) asparagine glycosylation is present at Asn160. The CMP-N-acetyl-beta-neuraminate site is built by Asn178, Ser303, and His335.

It belongs to the glycosyltransferase 29 family. As to expression, highly expressed in lactating mammary gland and adult testis. Lower levels in kidney.

Its subcellular location is the golgi apparatus membrane. It catalyses the reaction a beta-D-galactosyl-(1-&gt;3)-N-acetyl-alpha-D-galactosaminyl derivative + CMP-N-acetyl-beta-neuraminate = a beta-D-galactosyl-(1-&gt;3)-[N-acetyl-alpha-neuraminyl-(2-&gt;6)]-N-acetyl-alpha-D-galactosaminyl derivative + CMP + H(+). The enzyme catalyses a 3-O-[N-acetyl-alpha-D-galactosaminyl]-L-threonyl-[protein] + CMP-N-acetyl-beta-neuraminate = a 3-O-[N-acetyl-alpha-neuraminosyl-(2-&gt;6)-N-acetyl-alpha-D-galactosaminyl]-L-threonyl-[protein] + CMP + H(+). The catalysed reaction is a 3-O-[N-acetyl-alpha-neuraminyl-(2-&gt;3)-beta-D-galactosyl-(1-&gt;3)-N-acetyl-alpha-D-galactosaminyl]-L-threonyl-[protein] + CMP-N-acetyl-beta-neuraminate = a 3-O-{alpha-Neu5Ac-(2-&gt;3)-beta-D-Gal-(1-&gt;3)-[alpha-Neu5Ac-(2-&gt;6)]-alpha-D-GalNAc}-L-threonyl-[protein] + CMP + H(+). It participates in protein modification; protein glycosylation. In terms of biological role, catalyzes the transfer of N-acetylneuraminyl groups onto glycan chains in glycoproteins. Conjugates sialic acid with an alpha-2-6 linkage to N-acetylgalactosamine (GalNAc) glycan chains linked to serine or threonine in glycoproteins. Sialylates alphaGalNAc- and Galbeta1-&gt;3GalNAc-O-Ser/Thr epitopes also known as Tn and T antigens. In Mus musculus (Mouse), this protein is Alpha-N-acetylgalactosaminide alpha-2,6-sialyltransferase 2 (St6galnac2).